The chain runs to 324 residues: Olfactory receptor 6K2 (324 aa).

Over 1 to 25 (MESPNRTTIQEFIFSAFPYSWVKSV) the chain is Extracellular. The N-linked (GlcNAc...) asparagine glycan is linked to Asn-5. Residues 26–46 (VCFVPLLFIYAFIVVGNLVII) traverse the membrane as a helical segment. The Cytoplasmic segment spans residues 47–54 (TVVQLNTH). A helical membrane pass occupies residues 55 to 75 (LHTPMYTFISALSFLEIWYTT). Topologically, residues 76 to 98 (ATIPKMLSSLLSERSISFNGCLL) are extracellular. The cysteines at positions 96 and 188 are disulfide-linked. A helical membrane pass occupies residues 99 to 119 (QMYFFHSTGICEVCLLTVMAF). Residues 120 to 138 (DHYLAICSPLHYPSIMTPK) lie on the Cytoplasmic side of the membrane. Residues 139 to 159 (LCTQLTLSCCVCGFITPLPEI) form a helical membrane-spanning segment. Residues 160–198 (AWISTLPFCGSNHLEHIFCDFLPVLRLACTDTRAIVMIQ) lie on the Extracellular side of the membrane. A helical transmembrane segment spans residues 199 to 218 (VVDVIHAVEIITAVMLIFMS). Over 219–238 (YDGIVAVILRIHSAGGRRTA) the chain is Cytoplasmic. The helical transmembrane segment at 239–259 (FSTCVSHFIVFSLFFGSVTLM) threads the bilayer. Residues 260-272 (YLRFSATYSLFWD) are Extracellular-facing. Residues 273–293 (IAIALAFAVLSPFFNPIIYSL) form a helical membrane-spanning segment. The Cytoplasmic portion of the chain corresponds to 294 to 324 (RNKEIKEAIKKHIGQAKIFFSVRPGTSSKIF).

The protein belongs to the G-protein coupled receptor 1 family.

The protein localises to the cell membrane. In terms of biological role, odorant receptor. The sequence is that of Olfactory receptor 6K2 (OR6K2) from Homo sapiens (Human).